An 88-amino-acid chain; its full sequence is Small ribosomal subunit protein bS20 (88 aa).

A disordered region spans residues 1 to 36 (MANTSSAKKATRKIARRTAVNKSRRTQMRGSVRTVE).

The protein belongs to the bacterial ribosomal protein bS20 family.

Binds directly to 16S ribosomal RNA. The protein is Small ribosomal subunit protein bS20 of Rhodopseudomonas palustris (strain HaA2).